Reading from the N-terminus, the 588-residue chain is Aspartate--tRNA ligase (588 aa).

E177 serves as a coordination point for L-aspartate. The segment at 201 to 204 (QIFK) is aspartate. L-aspartate is bound at residue R223. ATP-binding positions include 223–225 (RDE) and Q232. H451 is a binding site for L-aspartate. E485 contributes to the ATP binding site. R492 contacts L-aspartate. 537-540 (GLDR) contributes to the ATP binding site.

Belongs to the class-II aminoacyl-tRNA synthetase family. Type 1 subfamily. In terms of assembly, homodimer.

Its subcellular location is the cytoplasm. It carries out the reaction tRNA(Asp) + L-aspartate + ATP = L-aspartyl-tRNA(Asp) + AMP + diphosphate. In terms of biological role, catalyzes the attachment of L-aspartate to tRNA(Asp) in a two-step reaction: L-aspartate is first activated by ATP to form Asp-AMP and then transferred to the acceptor end of tRNA(Asp). The chain is Aspartate--tRNA ligase from Staphylococcus saprophyticus subsp. saprophyticus (strain ATCC 15305 / DSM 20229 / NCIMB 8711 / NCTC 7292 / S-41).